A 90-amino-acid chain; its full sequence is Hypnin-A3 (90 aa).

Lectin specific for core(alpha 1-6)fucosylated N-glycans. Inhibits platelet aggregation. The polypeptide is Hypnin-A3 (Hypnea japonica (Japanese red alga)).